The chain runs to 97 residues: Large ribosomal subunit protein eL21 (97 aa).

Residues Met1–Gly24 show a composition bias toward basic residues. A disordered region spans residues Met1 to Leu25.

Belongs to the eukaryotic ribosomal protein eL21 family.

The chain is Large ribosomal subunit protein eL21 (rpl21e) from Pyrococcus horikoshii (strain ATCC 700860 / DSM 12428 / JCM 9974 / NBRC 100139 / OT-3).